We begin with the raw amino-acid sequence, 392 residues long: Carbamoyl phosphate synthase small chain (392 aa).

The tract at residues Met1–Asp174 is CPSase. Residues Ser47, Gly224, and Gly226 each coordinate L-glutamine. The region spanning Ser176–Arg392 is the Glutamine amidotransferase type-1 domain. The active-site Nucleophile is the Cys252. L-glutamine is bound by residues Leu253, Gln256, Asn294, Gly296, and Phe297. Residues His367 and Glu369 contribute to the active site.

The protein belongs to the CarA family. In terms of assembly, composed of two chains; the small (or glutamine) chain promotes the hydrolysis of glutamine to ammonia, which is used by the large (or ammonia) chain to synthesize carbamoyl phosphate. Tetramer of heterodimers (alpha,beta)4.

The catalysed reaction is hydrogencarbonate + L-glutamine + 2 ATP + H2O = carbamoyl phosphate + L-glutamate + 2 ADP + phosphate + 2 H(+). The enzyme catalyses L-glutamine + H2O = L-glutamate + NH4(+). It functions in the pathway amino-acid biosynthesis; L-arginine biosynthesis; carbamoyl phosphate from bicarbonate: step 1/1. Its pathway is pyrimidine metabolism; UMP biosynthesis via de novo pathway; (S)-dihydroorotate from bicarbonate: step 1/3. Small subunit of the glutamine-dependent carbamoyl phosphate synthetase (CPSase). CPSase catalyzes the formation of carbamoyl phosphate from the ammonia moiety of glutamine, carbonate, and phosphate donated by ATP, constituting the first step of 2 biosynthetic pathways, one leading to arginine and/or urea and the other to pyrimidine nucleotides. The small subunit (glutamine amidotransferase) binds and cleaves glutamine to supply the large subunit with the substrate ammonia. The protein is Carbamoyl phosphate synthase small chain of Thermotoga maritima (strain ATCC 43589 / DSM 3109 / JCM 10099 / NBRC 100826 / MSB8).